Here is a 544-residue protein sequence, read N- to C-terminus: Chaperonin GroEL (544 aa).

Residues 29–32, Lys50, 86–90, Gly415, and Asp495 each bind ATP; these read TLGP and DGTTT.

This sequence belongs to the chaperonin (HSP60) family. As to quaternary structure, forms a cylinder of 14 subunits composed of two heptameric rings stacked back-to-back. Interacts with the co-chaperonin GroES.

Its subcellular location is the cytoplasm. The enzyme catalyses ATP + H2O + a folded polypeptide = ADP + phosphate + an unfolded polypeptide.. Functionally, together with its co-chaperonin GroES, plays an essential role in assisting protein folding. The GroEL-GroES system forms a nano-cage that allows encapsulation of the non-native substrate proteins and provides a physical environment optimized to promote and accelerate protein folding. This chain is Chaperonin GroEL, found in Tannerella forsythia (Bacteroides forsythus).